The following is a 71-amino-acid chain: MPIVKVRENEPFDVALRRFKRSCEKAGVLSEVRRREFFEKPTWERKRKKAAAKKRHLKKLARENARRVKLY.

Belongs to the bacterial ribosomal protein bS21 family.

The polypeptide is Small ribosomal subunit protein bS21 (Alteromonas mediterranea (strain DSM 17117 / CIP 110805 / LMG 28347 / Deep ecotype)).